The primary structure comprises 152 residues: Xanthine-guanine phosphoribosyltransferase (152 aa).

Residues 37-38, R69, and 88-96 each bind 5-phospho-alpha-D-ribose 1-diphosphate; these read RG and DDLVDTGGT. A GMP-binding site is contributed by R69. D89 contributes to the Mg(2+) binding site. The guanine site is built by D92 and I135. Positions 92 and 135 each coordinate xanthine. GMP-binding positions include 92–96 and 134–135; these read DTGGT and WI.

It belongs to the purine/pyrimidine phosphoribosyltransferase family. XGPT subfamily. As to quaternary structure, homotetramer. Mg(2+) is required as a cofactor.

It is found in the cell inner membrane. It catalyses the reaction GMP + diphosphate = guanine + 5-phospho-alpha-D-ribose 1-diphosphate. The enzyme catalyses XMP + diphosphate = xanthine + 5-phospho-alpha-D-ribose 1-diphosphate. The catalysed reaction is IMP + diphosphate = hypoxanthine + 5-phospho-alpha-D-ribose 1-diphosphate. The protein operates within purine metabolism; GMP biosynthesis via salvage pathway; GMP from guanine: step 1/1. It participates in purine metabolism; XMP biosynthesis via salvage pathway; XMP from xanthine: step 1/1. In terms of biological role, purine salvage pathway enzyme that catalyzes the transfer of the ribosyl-5-phosphate group from 5-phospho-alpha-D-ribose 1-diphosphate (PRPP) to the N9 position of the 6-oxopurines guanine and xanthine to form the corresponding ribonucleotides GMP (guanosine 5'-monophosphate) and XMP (xanthosine 5'-monophosphate), with the release of PPi. To a lesser extent, also acts on hypoxanthine. The sequence is that of Xanthine-guanine phosphoribosyltransferase from Escherichia fergusonii (strain ATCC 35469 / DSM 13698 / CCUG 18766 / IAM 14443 / JCM 21226 / LMG 7866 / NBRC 102419 / NCTC 12128 / CDC 0568-73).